A 458-amino-acid polypeptide reads, in one-letter code: PH domain-containing protein DDB_G0274775 (458 aa).

The PH domain maps to 15 to 112 (PSDREGWLTK…WMESIKRNLD (98 aa)). Positions 111–154 (LDGEGGMKSGGNDIVSSPKINSEPTPKVNQNGSAPEKSSLSSPR) are disordered. The segment covering 124–142 (IVSSPKINSEPTPKVNQNG) has biased composition (polar residues). Positions 143 to 154 (SAPEKSSLSSPR) are enriched in low complexity.

The sequence is that of PH domain-containing protein DDB_G0274775 from Dictyostelium discoideum (Social amoeba).